Here is a 123-residue protein sequence, read N- to C-terminus: Small ribosomal subunit protein uS12 (123 aa).

Asp89 is modified (3-methylthioaspartic acid).

Belongs to the universal ribosomal protein uS12 family. In terms of assembly, part of the 30S ribosomal subunit. Contacts proteins S8 and S17. May interact with IF1 in the 30S initiation complex.

With S4 and S5 plays an important role in translational accuracy. In terms of biological role, interacts with and stabilizes bases of the 16S rRNA that are involved in tRNA selection in the A site and with the mRNA backbone. Located at the interface of the 30S and 50S subunits, it traverses the body of the 30S subunit contacting proteins on the other side and probably holding the rRNA structure together. The combined cluster of proteins S8, S12 and S17 appears to hold together the shoulder and platform of the 30S subunit. In Orientia tsutsugamushi (strain Boryong) (Rickettsia tsutsugamushi), this protein is Small ribosomal subunit protein uS12.